The following is a 178-amino-acid chain: MSRVGKAPVAVPSGVTININGQSVEVKGPKGTLSQDIPAPITVAQEGEELVVSRPDDHRKNRSLHGLSRSLVFNMIEGVTKGYTINMEIFGVGYRVQLKGKNLEFALGYSHPVLIEAPEGITFAVDGNTKFSIAGIDKQQVGQIAANIRRLRKDDPYKGKGIRYEGEQVRRKVGKTGK.

The protein belongs to the universal ribosomal protein uL6 family. In terms of assembly, part of the 50S ribosomal subunit.

This protein binds to the 23S rRNA, and is important in its secondary structure. It is located near the subunit interface in the base of the L7/L12 stalk, and near the tRNA binding site of the peptidyltransferase center. This is Large ribosomal subunit protein uL6 from Corynebacterium jeikeium (strain K411).